Consider the following 271-residue polypeptide: Aquaporin-2 (271 aa).

Topologically, residues 1 to 11 are cytoplasmic; the sequence is MWELRSIAFSR. The helical transmembrane segment at 12-32 threads the bilayer; the sequence is AVLAEFLATLLFVFFGLGSAL. The Extracellular portion of the chain corresponds to 33–40; the sequence is NWPQALPS. Residues 41 to 59 traverse the membrane as a helical segment; the sequence is VLQIAMAFGLAIGTLVQAL. At 60–64 the chain is on the cytoplasmic side; sequence GHVSG. The segment at residues 65–74 is an intramembrane region (discontinuously helical); the sequence is AHINPAVTVA. The NPA 1 motif lies at 68–70; the sequence is NPA. The Cytoplasmic segment spans residues 75–85; the sequence is CLVGCHVSFLR. Residues 86–107 form a helical membrane-spanning segment; it reads AVFYVAAQLLGAVAGAALLHEI. The Extracellular segment spans residues 108–127; sequence TPPAIRGDLAVNALNNNSTA. 2 N-linked (GlcNAc...) asparagine glycosylation sites follow: N123 and N124. A helical transmembrane segment spans residues 128 to 148; sequence GQAVTVELFLTLQLVLCIFPS. The Cytoplasmic segment spans residues 149–156; it reads TDKRRGKQ. The helical transmembrane segment at 157-176 threads the bilayer; it reads LGHPALSIGFSVALGHLLGI. Topologically, residues 177-180 are extracellular; sequence HYTG. The segment at residues 181 to 193 is an intramembrane region (discontinuously helical); sequence CSMNPARSLAPAI. An NPA 2 motif is present at residues 184 to 186; it reads NPA. Residues 194 to 201 lie on the Extracellular side of the membrane; that stretch reads VTGKFDDH. The helical transmembrane segment at 202 to 222 threads the bilayer; that stretch reads WVFWIGPLVGAIVASLLYNYV. At 223-271 the chain is on the cytoplasmic side; the sequence is LFPPAKSLSERLAVLKGLEPDTDWEEREVRRRQSVELHSPQSLPRGTKA. Residues 249-271 form a disordered region; it reads REVRRRQSVELHSPQSLPRGTKA. At S256 the chain carries Phosphoserine. Polar residues predominate over residues 261–271; the sequence is SPQSLPRGTKA.

It belongs to the MIP/aquaporin (TC 1.A.8) family. In terms of assembly, homotetramer. Post-translationally, ser-256 phosphorylation is necessary and sufficient for expression at the apical membrane. Endocytosis is not phosphorylation-dependent. In terms of processing, N-glycosylated. As to expression, expressed in renal collecting tubules.

The protein localises to the apical cell membrane. It localises to the basolateral cell membrane. Its subcellular location is the cell membrane. The protein resides in the cytoplasmic vesicle membrane. It is found in the golgi apparatus. The protein localises to the trans-Golgi network membrane. The enzyme catalyses H2O(in) = H2O(out). The catalysed reaction is glycerol(in) = glycerol(out). Forms a water-specific channel that provides the plasma membranes of renal collecting duct with high permeability to water, thereby permitting water to move in the direction of an osmotic gradient. Could also be permeable to glycerol. The protein is Aquaporin-2 of Ovis aries (Sheep).